The primary structure comprises 129 residues: Translation initiation factor 5A (129 aa).

K36 bears the Hypusine mark.

The protein belongs to the eIF-5A family.

It is found in the cytoplasm. In terms of biological role, functions by promoting the formation of the first peptide bond. This is Translation initiation factor 5A from Picrophilus torridus (strain ATCC 700027 / DSM 9790 / JCM 10055 / NBRC 100828 / KAW 2/3).